Reading from the N-terminus, the 401-residue chain is Formate dehydrogenase (401 aa).

Residues I123 and N147 each coordinate substrate. NAD(+) contacts are provided by residues S148, 202 to 203, D222, 257 to 261, T283, D309, 333 to 336, and S381; these read RI, PLHPE, and HISG.

This sequence belongs to the D-isomer specific 2-hydroxyacid dehydrogenase family. FDH subfamily. As to quaternary structure, homodimer.

The protein localises to the cytoplasm. It catalyses the reaction formate + NAD(+) = CO2 + NADH. Its function is as follows. Catalyzes the NAD(+)-dependent oxidation of formate to carbon dioxide. Formate oxidation is the final step in the methanol oxidation pathway in methylotrophic microorganisms. Has a role in the detoxification of exogenous formate in non-methylotrophic organisms. In Pseudomonas sp. (strain 101) (Achromobacter parvulus T1), this protein is Formate dehydrogenase.